We begin with the raw amino-acid sequence, 320 residues long: Geranylgeranyl pyrophosphate synthase (320 aa).

Isopentenyl diphosphate is bound by residues Lys-35, Arg-38, and His-67. Mg(2+) is bound by residues Asp-74 and Asp-78. Position 83 (Arg-83) interacts with dimethylallyl diphosphate. Arg-84 is a binding site for isopentenyl diphosphate. Residues Lys-168, Thr-169, Gln-206, Lys-223, and Lys-233 each coordinate dimethylallyl diphosphate.

It belongs to the FPP/GGPP synthase family. Mg(2+) serves as cofactor.

The protein localises to the cytoplasm. It carries out the reaction isopentenyl diphosphate + dimethylallyl diphosphate = (2E)-geranyl diphosphate + diphosphate. The catalysed reaction is isopentenyl diphosphate + (2E)-geranyl diphosphate = (2E,6E)-farnesyl diphosphate + diphosphate. It catalyses the reaction isopentenyl diphosphate + (2E,6E)-farnesyl diphosphate = (2E,6E,10E)-geranylgeranyl diphosphate + diphosphate. The protein operates within isoprenoid biosynthesis; farnesyl diphosphate biosynthesis; farnesyl diphosphate from geranyl diphosphate and isopentenyl diphosphate: step 1/1. It functions in the pathway isoprenoid biosynthesis; geranyl diphosphate biosynthesis; geranyl diphosphate from dimethylallyl diphosphate and isopentenyl diphosphate: step 1/1. Its pathway is isoprenoid biosynthesis; geranylgeranyl diphosphate biosynthesis; geranylgeranyl diphosphate from farnesyl diphosphate and isopentenyl diphosphate: step 1/1. Its function is as follows. Catalyzes the trans-addition of the 3 molecules of IPP onto DMAPP to form geranylgeranyl pyrophosphate. May be involved in vesicle trafficking and protein sorting. The chain is Geranylgeranyl pyrophosphate synthase (BTS1) from Eremothecium gossypii (strain ATCC 10895 / CBS 109.51 / FGSC 9923 / NRRL Y-1056) (Yeast).